Consider the following 39-residue polypeptide: Omega-theraphotoxin-Asp1g (39 aa).

3 disulfide bridges follow: Cys4-Cys25, Cys8-Cys31, and Cys17-Cys36.

It belongs to the neurotoxin 12 (Hwtx-2) family. 06 (TXP1) subfamily. Expressed by the venom gland.

The protein localises to the secreted. Inhibits voltage-gated calcium channels (Cav) in rat cerebellar granule cells. Has insecticidal activity. This chain is Omega-theraphotoxin-Asp1g, found in Aphonopelma sp. (American tarantula).